A 780-amino-acid polypeptide reads, in one-letter code: MVDFLPKVTEINPPSEGNDGEDNIKPLSSGSEQRPLKEEGQQGGRRHHRRLSSMHEYFDPFSNAEVYYGPITDPRKQSKIHRLNRTRTMSVFNKVSDFKNGMKDYTLKRRGSEDDSFLSSQGNRRFYIDNVDLALDELLASEDTDKNHQITIEDTGPKVIKVGTANSNGFKHVNVRGTYMLSNLLQELTIAKSFGRHQIFLDEARINENPVDRLSRLITTQFWTSLTRRVDLYNIAEIARDSKIDTPGAKNPRIYVPYNCPEQYEFYIQASQMNPSLKLEVEYLPKDITAEYVKSLNDTPGLLALAMEEHVNPSTGERSLVGYPYAVPGGRFNELYGWDSYLMALGLIESNKVDVARGMVEHFIFEIDHYSKILNANRSYYLCRSQPPFLTDMALLVFEKIGGKNNPNAIQLLKRAFRAAIKEYKEVWMSSPRLDSLTGLSCYHSDGIGIPPETEPDHFDTILLPYAEKYNVTLEKLRYLYNEGMIKEPKLDAFFLHDRAVRESGHDTTYRFEGVCAYLATIDLNSLLYKYEKDIAFVIKEYFGNEYKDENDGTVTDSEHWEELAELRKTRINKYMWDEDSGFFFYYNTKLKCRTSYESATTFWSLWAGLATEEQAKITVEKALPQLEMLGGLVACTEKSRGPISIDRPIRQWDYPFGWAPHQILAWKGLSAYGYQQVATRLAYRWLYMITKSFVDYNGMVVEKYDVTRGTDPHRVDAEYGNQGADFKGVATEGFGWVNTSYLLGLKYMNNHARRALAACSPPLPFFNSLKPSEKKLYYL.

The tract at residues 1–48 (MVDFLPKVTEINPPSEGNDGEDNIKPLSSGSEQRPLKEEGQQGGRRHH) is disordered. Phosphoserine occurs at positions 52 and 53. Phosphothreonine is present on Thr88. Residue Ser112 is modified to Phosphoserine. Substrate contacts are provided by residues Arg331, 338-339 (WD), Asn375, Arg384, 384-386 (RSQ), and Gly505. Catalysis depends on proton donor/acceptor residues Asp507 and Glu703.

This sequence belongs to the glycosyl hydrolase 37 family.

It carries out the reaction alpha,alpha-trehalose + H2O = alpha-D-glucose + beta-D-glucose. This is Probable trehalase (NTH2) from Saccharomyces cerevisiae (strain ATCC 204508 / S288c) (Baker's yeast).